A 203-amino-acid chain; its full sequence is Glycerol-3-phosphate acyltransferase (203 aa).

Transmembrane regions (helical) follow at residues 3–23 (ILLA…VVVS), 51–71 (KAAI…VWLV), 74–94 (FGIG…LGHL), 116–136 (AVHP…AFFF), 140–160 (SLAA…LFGT), and 164–178 (PVAW…LLIW).

Belongs to the PlsY family. As to quaternary structure, probably interacts with PlsX.

The protein resides in the cell inner membrane. The catalysed reaction is an acyl phosphate + sn-glycerol 3-phosphate = a 1-acyl-sn-glycero-3-phosphate + phosphate. It participates in lipid metabolism; phospholipid metabolism. Its function is as follows. Catalyzes the transfer of an acyl group from acyl-phosphate (acyl-PO(4)) to glycerol-3-phosphate (G3P) to form lysophosphatidic acid (LPA). This enzyme utilizes acyl-phosphate as fatty acyl donor, but not acyl-CoA or acyl-ACP. The chain is Glycerol-3-phosphate acyltransferase from Burkholderia pseudomallei (strain K96243).